Here is a 563-residue protein sequence, read N- to C-terminus: Arginine--tRNA ligase (563 aa).

Residues 122–132 (PNIAKPISMGH) carry the 'HIGH' region motif.

Belongs to the class-I aminoacyl-tRNA synthetase family. Monomer.

It is found in the cytoplasm. It carries out the reaction tRNA(Arg) + L-arginine + ATP = L-arginyl-tRNA(Arg) + AMP + diphosphate. The sequence is that of Arginine--tRNA ligase from Latilactobacillus sakei subsp. sakei (strain 23K) (Lactobacillus sakei subsp. sakei).